A 416-amino-acid chain; its full sequence is L-threonine dehydratase biosynthetic IlvA (416 aa).

N6-(pyridoxal phosphate)lysine is present on Lys51. Pyridoxal 5'-phosphate-binding positions include Asn78, 184–188, and Ser309; that span reads GGGGL. Residues 333 to 407 form the ACT-like domain; it reads HYFVINFPQR…FDNRYVNLHG (75 aa).

The protein belongs to the serine/threonine dehydratase family. In terms of assembly, homotetramer. Pyridoxal 5'-phosphate is required as a cofactor.

It carries out the reaction L-threonine = 2-oxobutanoate + NH4(+). The protein operates within amino-acid biosynthesis; L-isoleucine biosynthesis; 2-oxobutanoate from L-threonine: step 1/1. Catalyzes the anaerobic formation of alpha-ketobutyrate and ammonia from threonine in a two-step reaction. The first step involved a dehydration of threonine and a production of enamine intermediates (aminocrotonate), which tautomerizes to its imine form (iminobutyrate). Both intermediates are unstable and short-lived. The second step is the nonenzymatic hydrolysis of the enamine/imine intermediates to form 2-ketobutyrate and free ammonia. In the low water environment of the cell, the second step is accelerated by RidA. This chain is L-threonine dehydratase biosynthetic IlvA (ilvA), found in Lactococcus lactis subsp. lactis (strain IL1403) (Streptococcus lactis).